The sequence spans 337 residues: Glyceraldehyde-3-phosphate dehydrogenase (337 aa).

NAD(+)-binding positions include R12–I13, D34, and K79. D-glyceraldehyde 3-phosphate-binding positions include S150–T152, T181, T210–G211, and R233. C151 acts as the Nucleophile in catalysis. N315 serves as a coordination point for NAD(+).

Belongs to the glyceraldehyde-3-phosphate dehydrogenase family. As to quaternary structure, homotetramer.

The protein resides in the cytoplasm. The enzyme catalyses D-glyceraldehyde 3-phosphate + phosphate + NAD(+) = (2R)-3-phospho-glyceroyl phosphate + NADH + H(+). It functions in the pathway carbohydrate degradation; glycolysis; pyruvate from D-glyceraldehyde 3-phosphate: step 1/5. The polypeptide is Glyceraldehyde-3-phosphate dehydrogenase (GPD1) (Cochliobolus heterostrophus (Southern corn leaf blight fungus)).